A 492-amino-acid chain; its full sequence is MTDLTSLTLAEARDGLVNKSFTAVELTDAHLAAIEAARVLNAYVLETPDQARQMAQAADAQIAKGEGGPLAGIPLGIKDLFATKGTRTTACSKILGDFKPPYESTVTSQLWRDGAVLLGKLNNDEFAMGSSNETSCFGPVVNPWRRAGSETKLVPGGSSGGSAAAVAAGLCLGATATDTGGSIRQPAAFTGTVGIKPTYGRCSRWGIVAFASSLDQAGPIARTVRDSAILLGSMAGFDPKDTTSVDRPVPNYEAAIGGSVKGMKIGIPKEYRLDGMPAEIEKLWMQGAEWLKAAGAELVEVSLPHTKYALPAYYIVAPAEASSNLARYDGVRYGTRVNGRNIVEMYENTRAAGFGAEVKRRIMIGTYVLSAGYYDAYYLRAQKVRTLIKRDFEQCFDQGVSAILTPATPSAAFGIGEKGGADPVEMYLNDIFTVTVNMAGLPGIAVPAGSDSQGLPLGLQLIGRPFDEETLFSLGDVIEQSAGRFTPAKWWA.

Residues K78 and S158 each act as charge relay system in the active site. S182 functions as the Acyl-ester intermediate in the catalytic mechanism.

This sequence belongs to the amidase family. GatA subfamily. As to quaternary structure, heterotrimer of A, B and C subunits.

It catalyses the reaction L-glutamyl-tRNA(Gln) + L-glutamine + ATP + H2O = L-glutaminyl-tRNA(Gln) + L-glutamate + ADP + phosphate + H(+). Allows the formation of correctly charged Gln-tRNA(Gln) through the transamidation of misacylated Glu-tRNA(Gln) in organisms which lack glutaminyl-tRNA synthetase. The reaction takes place in the presence of glutamine and ATP through an activated gamma-phospho-Glu-tRNA(Gln). This is Glutamyl-tRNA(Gln) amidotransferase subunit A from Rhodopseudomonas palustris (strain HaA2).